The chain runs to 375 residues: 2-isopropylmalate synthase (375 aa).

A Pyruvate carboxyltransferase domain is found at 1–124 (GRTSIDNLCR…FTNIKHNELY (124 aa)). Residues histidine 59, histidine 61, and asparagine 95 each coordinate Mn(2+). The segment at 250 to 375 (QLKYFSIHSG…SKIKNIKNKK (126 aa)) is regulatory domain.

It belongs to the alpha-IPM synthase/homocitrate synthase family. LeuA type 1 subfamily. In terms of assembly, homodimer.

The protein resides in the cytoplasm. The enzyme catalyses 3-methyl-2-oxobutanoate + acetyl-CoA + H2O = (2S)-2-isopropylmalate + CoA + H(+). It functions in the pathway amino-acid biosynthesis; L-leucine biosynthesis; L-leucine from 3-methyl-2-oxobutanoate: step 1/4. In terms of biological role, catalyzes the condensation of the acetyl group of acetyl-CoA with 3-methyl-2-oxobutanoate (2-ketoisovalerate) to form 3-carboxy-3-hydroxy-4-methylpentanoate (2-isopropylmalate). This is 2-isopropylmalate synthase from Buchnera aphidicola subsp. Thelaxes suberi.